Here is a 198-residue protein sequence, read N- to C-terminus: Ribonuclease HII (198 aa).

Residues 10–198 (HLVAGVDEVG…PVKRALGLVS (189 aa)) form the RNase H type-2 domain. Asp16, Glu17, and Asp108 together coordinate a divalent metal cation.

The protein belongs to the RNase HII family. Requires Mn(2+) as cofactor. The cofactor is Mg(2+).

The protein resides in the cytoplasm. It catalyses the reaction Endonucleolytic cleavage to 5'-phosphomonoester.. Endonuclease that specifically degrades the RNA of RNA-DNA hybrids. The polypeptide is Ribonuclease HII (Salmonella paratyphi A (strain AKU_12601)).